We begin with the raw amino-acid sequence, 248 residues long: uncharacterized protein (248 aa).

9 to 33 contacts NADP(+); that stretch reads IITGASSGIGKATALLLAEKGAKLV. Ser141 is a substrate binding site. The active-site Proton acceptor is the Tyr154.

It belongs to the short-chain dehydrogenases/reductases (SDR) family.

This is an uncharacterized protein from Listeria monocytogenes serovar 1/2a (strain ATCC BAA-679 / EGD-e).